A 648-amino-acid polypeptide reads, in one-letter code: DNA ligase (648 aa).

Residues 30–34 (DEEYD) and 79–80 (SQ) each bind NAD(+). Residue Lys-110 is the N6-AMP-lysine intermediate of the active site. Residues Arg-131, Glu-165, Lys-280, and Lys-304 each coordinate NAD(+). Cys-398, Cys-401, Cys-414, and Cys-419 together coordinate Zn(2+). One can recognise a BRCT domain in the interval 573 to 648 (VSENPFKNKT…LTEEEMNSLF (76 aa)).

The protein belongs to the NAD-dependent DNA ligase family. LigA subfamily. Mg(2+) serves as cofactor. It depends on Mn(2+) as a cofactor.

It catalyses the reaction NAD(+) + (deoxyribonucleotide)n-3'-hydroxyl + 5'-phospho-(deoxyribonucleotide)m = (deoxyribonucleotide)n+m + AMP + beta-nicotinamide D-nucleotide.. Its function is as follows. DNA ligase that catalyzes the formation of phosphodiester linkages between 5'-phosphoryl and 3'-hydroxyl groups in double-stranded DNA using NAD as a coenzyme and as the energy source for the reaction. It is essential for DNA replication and repair of damaged DNA. The protein is DNA ligase of Aliarcobacter butzleri (strain RM4018) (Arcobacter butzleri).